The primary structure comprises 504 residues: Plasma protease C1 inhibitor (504 aa).

A signal peptide spans 1-22; it reads MASKLTPLTLLLLLLAGDRAFS. Residues 23 to 75 form a disordered region; it reads DSEVTSHSSQDPLVVQEGSRDSVPERDGSRSPIEHTGQSSTWPTTSGSTKISN. Residues 24 to 33 show a composition bias toward polar residues; that stretch reads SEVTSHSSQD. Positions 40 to 55 are enriched in basic and acidic residues; it reads GSRDSVPERDGSRSPI. Residues 58 to 75 are compositionally biased toward polar residues; sequence TGQSSTWPTTSGSTKISN. Asn-75, Asn-83, Asn-107, Asn-243, and Asn-356 each carry an N-linked (GlcNAc...) asparagine glycan. The disordered stretch occupies residues 94-132; the sequence is AQLPEDSPSQSPVNSSSPPSTASAPPTQAPTEPLCPEPL. A compositionally biased stretch (low complexity) spans 100 to 125; that stretch reads SPSQSPVNSSSPPSTASAPPTQAPTE.

It belongs to the serpin family. Interacts with MASP1.

The protein resides in the secreted. Its function is as follows. Serine protease inhibitor, which acrs as a regulator of the classical complement pathway. Forms a proteolytically inactive stoichiometric complex with the C1r or C1s proteases. May also regulate blood coagulation, fibrinolysis and the generation of kinins. Very efficient inhibitor of FXIIa. Inhibits chymotrypsin and kallikrein. This chain is Plasma protease C1 inhibitor (Serping1), found in Rattus norvegicus (Rat).